We begin with the raw amino-acid sequence, 938 residues long: Translation initiation factor IF-2 (938 aa).

Residues 57-205 show a composition bias toward basic and acidic residues; sequence DKSKKVASKE…PKSEETKSEE (149 aa). The segment at 57 to 350 is disordered; that stretch reads DKSKKVASKE…RSADDLAQQE (294 aa). Positions 206 to 215 are enriched in acidic residues; that stretch reads TTEGGESEEK. A compositionally biased stretch (basic and acidic residues) spans 248–259; the sequence is KKEEKKEDDKKD. Composition is skewed to basic residues over residues 260 to 270 and 285 to 296; these read KDRRKKRRRRI and GAKKGGRTRSKP. A compositionally biased stretch (basic and acidic residues) spans 297-319; sequence ITKEEPTEEEVQKQVRETLEKLQ. A compositionally biased stretch (basic residues) spans 323–333; the sequence is SKGKGAKYRRQ. The segment covering 334 to 344 has biased composition (basic and acidic residues); that stretch reads KRDEHRQRSAD. In terms of domain architecture, tr-type G spans 434–602; it reads TRAPIVTVMG…KVLLEAEILE (169 aa). Residues 443–450 are G1; that stretch reads GHVDHGKT. 443–450 lines the GTP pocket; it reads GHVDHGKT. The segment at 468 to 472 is G2; that stretch reads GITQH. The G3 stretch occupies residues 490–493; the sequence is DTPG. GTP is bound by residues 490-494 and 544-547; these read DTPGH and NKSD. Residues 544 to 547 are G4; it reads NKSD. The interval 580–582 is G5; the sequence is SAK.

Belongs to the TRAFAC class translation factor GTPase superfamily. Classic translation factor GTPase family. IF-2 subfamily.

The protein localises to the cytoplasm. In terms of biological role, one of the essential components for the initiation of protein synthesis. Protects formylmethionyl-tRNA from spontaneous hydrolysis and promotes its binding to the 30S ribosomal subunits. Also involved in the hydrolysis of GTP during the formation of the 70S ribosomal complex. This is Translation initiation factor IF-2 from Christiangramia forsetii (strain DSM 17595 / CGMCC 1.15422 / KT0803) (Gramella forsetii).